Reading from the N-terminus, the 230-residue chain is 7-cyano-7-deazaguanine synthase (230 aa).

8–18 (LSGGMDSAVVT) is a binding site for ATP. Zn(2+) contacts are provided by Cys186, Cys196, Cys199, and Cys202.

Belongs to the QueC family. Requires Zn(2+) as cofactor.

The enzyme catalyses 7-carboxy-7-deazaguanine + NH4(+) + ATP = 7-cyano-7-deazaguanine + ADP + phosphate + H2O + H(+). It functions in the pathway purine metabolism; 7-cyano-7-deazaguanine biosynthesis. In terms of biological role, catalyzes the ATP-dependent conversion of 7-carboxy-7-deazaguanine (CDG) to 7-cyano-7-deazaguanine (preQ(0)). This Xylella fastidiosa (strain M12) protein is 7-cyano-7-deazaguanine synthase.